Reading from the N-terminus, the 136-residue chain is MARTKQTARKSTGGKAPRKQLASKAARKAAPSTGGVKKPHRYKPGTVALREIRRYQKSTELLIRKLPFQRLVREIAQDFKSDLRFQSSAIGALQESVEAYLVSLFEDTNLCAIHAKRVTIQSKDIQLARRLRGERS.

Residues 1–43 (MARTKQTARKSTGGKAPRKQLASKAARKAAPSTGGVKKPHRYK) are disordered. Residue K5 is modified to N6,N6,N6-trimethyllysine; alternate. K5 carries the post-translational modification N6,N6-dimethyllysine; alternate. N6-methyllysine; alternate is present on residues K5 and K10. An N6-acetyllysine; alternate modification is found at K10. The residue at position 11 (S11) is a Phosphoserine. At K15 the chain carries N6,N6-dimethyllysine; alternate. K15, K19, K24, K28, and K37 each carry N6-acetyllysine; alternate. 4 positions are modified to N6-methyllysine; alternate: K19, K24, K28, and K37. An N6,N6,N6-trimethyllysine; alternate mark is found at K28 and K37. Residues K28 and K37 each carry the N6,N6-dimethyllysine; alternate modification. K57 and K65 each carry N6-acetyllysine. At K80 the chain carries N6,N6,N6-trimethyllysine; alternate. K80 bears the N6,N6-dimethyllysine; alternate mark. The residue at position 80 (K80) is an N6-methyllysine; alternate.

This sequence belongs to the histone H3 family. As to quaternary structure, the nucleosome is a histone octamer containing two molecules each of H2A, H2B, H3 and H4 assembled in one H3-H4 heterotetramer and two H2A-H2B heterodimers. The octamer wraps approximately 147 bp of DNA. In terms of processing, phosphorylated to form H3S10ph. H3S10ph promotes subsequent H3K14ac formation and is required for transcriptional activation through TBP recruitment to the promoters. Post-translationally, mono-, di- and trimethylated by the COMPASS complex to form H3K4me1/2/3. H3K4me activates gene expression by regulating transcription elongation and plays a role in telomere length maintenance. H3K4me enrichment correlates with transcription levels, and occurs in a 5' to 3' gradient with H3K4me3 enrichment at the 5'-end of genes, shifting to H3K4me2 and then H3K4me1. Methylated by set2 to form H3K36me. H3K36me represses gene expression. Methylated by dot1 to form H3K79me. H3K79me is required for association of SIR proteins with telomeric regions and for telomeric silencing. The COMPASS-mediated formation of H3K4me2/3 and the dot1-mediated formation of H3K79me require H2BK123ub1. Acetylation of histone H3 leads to transcriptional activation. H3K14ac formation by gcn5 is promoted by H3S10ph. H3K14ac can also be formed by esa1. H3K56ac formation occurs predominantly in newly synthesized H3 molecules during G1, S and G2/M of the cell cycle and may be involved in DNA repair.

The protein localises to the nucleus. Its subcellular location is the chromosome. In terms of biological role, core component of nucleosome. Nucleosomes wrap and compact DNA into chromatin, limiting DNA accessibility to the cellular machineries which require DNA as a template. Histones thereby play a central role in transcription regulation, DNA repair, DNA replication and chromosomal stability. DNA accessibility is regulated via a complex set of post-translational modifications of histones, also called histone code, and nucleosome remodeling. The protein is Histone H3 (hht1) of Neosartorya fischeri (strain ATCC 1020 / DSM 3700 / CBS 544.65 / FGSC A1164 / JCM 1740 / NRRL 181 / WB 181) (Aspergillus fischerianus).